The chain runs to 184 residues: HVA22-like protein c (184 aa).

A run of 3 helical transmembrane segments spans residues 13–33, 51–71, and 73–93; these read VLIK…YPLY, LTYW…SKPL, and WFPI…LPQF.

Belongs to the DP1 family. In terms of tissue distribution, predominantly expressed in flower buds and stem.

Its subcellular location is the membrane. The chain is HVA22-like protein c (HVA22C) from Arabidopsis thaliana (Mouse-ear cress).